The chain runs to 404 residues: Deoxyguanosinetriphosphate triphosphohydrolase-like protein (404 aa).

Residues 1-33 (MSVGMAAPRAAFSCDPDRSRGRQFAEPPSSNRS) form a disordered region. Residues 69-217 (RLTHSLEVAQ…AALADDIAYD (149 aa)) enclose the HD domain.

This sequence belongs to the dGTPase family. Type 2 subfamily.

This chain is Deoxyguanosinetriphosphate triphosphohydrolase-like protein, found in Rhodopseudomonas palustris (strain HaA2).